The chain runs to 151 residues: Cytochrome c-type biogenesis protein CcmE (151 aa).

Topologically, residues 1 to 8 are cytoplasmic; it reads MNPQRKKR. Residues 9–29 traverse the membrane as a helical; Signal-anchor for type II membrane protein segment; that stretch reads LLLIVGLLVGVGVAVGFALSA. The Periplasmic portion of the chain corresponds to 30 to 151; sequence LQQNINLFYT…QAAAGGETKP (122 aa). Heme is bound by residues His-124 and Tyr-128.

The protein belongs to the CcmE/CycJ family.

The protein localises to the cell inner membrane. Heme chaperone required for the biogenesis of c-type cytochromes. Transiently binds heme delivered by CcmC and transfers the heme to apo-cytochromes in a process facilitated by CcmF and CcmH. In Pseudomonas putida (strain ATCC 700007 / DSM 6899 / JCM 31910 / BCRC 17059 / LMG 24140 / F1), this protein is Cytochrome c-type biogenesis protein CcmE.